Here is a 157-residue protein sequence, read N- to C-terminus: Small ribosomal subunit protein uS7 (157 aa).

Belongs to the universal ribosomal protein uS7 family. As to quaternary structure, part of the 30S ribosomal subunit. Contacts proteins S9 and S11.

In terms of biological role, one of the primary rRNA binding proteins, it binds directly to 16S rRNA where it nucleates assembly of the head domain of the 30S subunit. Is located at the subunit interface close to the decoding center, probably blocks exit of the E-site tRNA. The polypeptide is Small ribosomal subunit protein uS7 (Francisella philomiragia subsp. philomiragia (strain ATCC 25017 / CCUG 19701 / FSC 153 / O#319-036)).